A 343-amino-acid polypeptide reads, in one-letter code: Thiamine-phosphate synthase (343 aa).

The interval Met1 to Arg123 is unknown. The tract at residues Val124 to Pro343 is thiamine-phosphate synthase. Residues Gln171–Lys175 and Asn203 each bind 4-amino-2-methyl-5-(diphosphooxymethyl)pyrimidine. 2 residues coordinate Mg(2+): Asp204 and Asp223. Ser242 lines the 4-amino-2-methyl-5-(diphosphooxymethyl)pyrimidine pocket. Position 268-270 (Thr268–Thr270) interacts with 2-[(2R,5Z)-2-carboxy-4-methylthiazol-5(2H)-ylidene]ethyl phosphate. Lys271 lines the 4-amino-2-methyl-5-(diphosphooxymethyl)pyrimidine pocket. Residue Gly298 participates in 2-[(2R,5Z)-2-carboxy-4-methylthiazol-5(2H)-ylidene]ethyl phosphate binding.

The protein belongs to the thiamine-phosphate synthase family. Mg(2+) serves as cofactor.

It carries out the reaction 2-[(2R,5Z)-2-carboxy-4-methylthiazol-5(2H)-ylidene]ethyl phosphate + 4-amino-2-methyl-5-(diphosphooxymethyl)pyrimidine + 2 H(+) = thiamine phosphate + CO2 + diphosphate. The enzyme catalyses 2-(2-carboxy-4-methylthiazol-5-yl)ethyl phosphate + 4-amino-2-methyl-5-(diphosphooxymethyl)pyrimidine + 2 H(+) = thiamine phosphate + CO2 + diphosphate. The catalysed reaction is 4-methyl-5-(2-phosphooxyethyl)-thiazole + 4-amino-2-methyl-5-(diphosphooxymethyl)pyrimidine + H(+) = thiamine phosphate + diphosphate. It functions in the pathway cofactor biosynthesis; thiamine diphosphate biosynthesis; thiamine phosphate from 4-amino-2-methyl-5-diphosphomethylpyrimidine and 4-methyl-5-(2-phosphoethyl)-thiazole: step 1/1. Its function is as follows. Condenses 4-methyl-5-(beta-hydroxyethyl)thiazole monophosphate (THZ-P) and 2-methyl-4-amino-5-hydroxymethyl pyrimidine pyrophosphate (HMP-PP) to form thiamine monophosphate (TMP). The polypeptide is Thiamine-phosphate synthase (Synechocystis sp. (strain ATCC 27184 / PCC 6803 / Kazusa)).